A 570-amino-acid chain; its full sequence is Formate--tetrahydrofolate ligase (570 aa).

65–72 (TPHGEGKT) is a binding site for ATP.

This sequence belongs to the formate--tetrahydrofolate ligase family.

The catalysed reaction is (6S)-5,6,7,8-tetrahydrofolate + formate + ATP = (6R)-10-formyltetrahydrofolate + ADP + phosphate. The protein operates within one-carbon metabolism; tetrahydrofolate interconversion. The sequence is that of Formate--tetrahydrofolate ligase from Shewanella sp. (strain ANA-3).